We begin with the raw amino-acid sequence, 640 residues long: Chaperone protein HtpG (640 aa).

The interval 1–352 (MTEQTATQNY…SADLPLNVSR (352 aa)) is a; substrate-binding. Residues 353–571 (ELLQESRDVK…DGELSPQLIR (219 aa)) are b. A c region spans residues 572–640 (MLKQAGQAVP…VKRINSLLLK (69 aa)).

This sequence belongs to the heat shock protein 90 family. Homodimer.

It localises to the cytoplasm. Molecular chaperone. Has ATPase activity. This is Chaperone protein HtpG from Acinetobacter baylyi (strain ATCC 33305 / BD413 / ADP1).